A 188-amino-acid polypeptide reads, in one-letter code: CyanoP (188 aa).

The signal sequence occupies residues 1 to 23; the sequence is MLKKSLSTAVVLVTLLLSFTLTA. C24 is lipidated: N-palmitoyl cysteine. C24 carries the S-diacylglycerol cysteine lipid modification.

This sequence belongs to the PsbP family. CyanoP subfamily. As to quaternary structure, monomer. Present in about 3% of photosystem II (PSII) preparations. Purifies with partially assembled PSII complexes, in addition to a small amount of monomeric and dimeric PSII, and trimeric PSI.

It is found in the cellular thylakoid membrane. Functionally, plays a role in the early stages of photosystem II (PSII) assembly; binds to D2 (psbD) and may facilitate its incorporation into PSII. Required for optimal photoautotrophic growth in the absence of Ca(2+) or Cl(-), functions in optimizing PSII water oxidation/O(2) evolving activity. Might be involved in assembly of the oxygen evolving complex. The chain is CyanoP from Synechocystis sp. (strain ATCC 27184 / PCC 6803 / Kazusa).